The following is a 629-amino-acid chain: MDYHGGTYDVIVVGAGHAGCEAALASARIGAKTLVITLNLDMIAFMPCNPSIGGPAKGIVVREIDALGGEMAKNIDKTYIQMRMLNTGKGPAVRALRAQADKVLYQREMKKTLENQENLTLLQGKVERLIVEDGVCKGVITHTGAHYYAKAVVITTGTFLRGEIIIGDIKYSSGPNNQQPSIKLSEHLEELGFELVRFKTGTPPRVNSRTIDYSKTEIQPGDKEPRAFSYETTKYITDQLPCWLTYTTEETHRIIDENLHLSPMYSGMIKGTGPRYCPSIEDKVVRFHDKPRHQIFLEPEGRETEEVYVQGLSTSLPEHIQRKLLETIPGLEKAQLMRAGYAIEYDAIVPTQLWPTLETKLVKNLYTAGQINGTSGYEEAAGQGIMAGINAAHRALGREEIILSRSDAYIGVLIDDLVTKGTNEPYRLLTSRAEYRLLLRHDNADLRLTELGYRIGLISEERYQKFLAKKEAIEREKKRLQTVIIKPTPKVQEVIREAGGSELKDGIRAADLLRRPEMTYEHIRKLAPADEEIAPEVAEQVEIQIKYEGYIQKSLQEVERLKKMENKKIPEDIDYDAIQGLATEARQKLKQVRPLSIAQASRISGVNPADISILLVYLEQGRIARVSNE.

Residues 14–19 (GAGHAG), V126, and S181 each bind FAD. An NAD(+)-binding site is contributed by 273–287 (GPRYCPSIEDKVVRF). Position 370 (Q370) interacts with FAD.

This sequence belongs to the MnmG family. In terms of assembly, homodimer. Heterotetramer of two MnmE and two MnmG subunits. FAD serves as cofactor.

Its subcellular location is the cytoplasm. NAD-binding protein involved in the addition of a carboxymethylaminomethyl (cmnm) group at the wobble position (U34) of certain tRNAs, forming tRNA-cmnm(5)s(2)U34. This is tRNA uridine 5-carboxymethylaminomethyl modification enzyme MnmG from Geobacillus kaustophilus (strain HTA426).